A 310-amino-acid polypeptide reads, in one-letter code: Olfactory receptor 5P54 (310 aa).

Residues 1–25 (MNGGNHTSMTELFILGPTEDPTFCI) lie on the Extracellular side of the membrane. An N-linked (GlcNAc...) asparagine glycan is attached at N5. The helical transmembrane segment at 26–46 (AFFVIFLGVYMVTLVGNISII) threads the bilayer. The Cytoplasmic segment spans residues 47 to 54 (TLIRISSQ). A helical transmembrane segment spans residues 55-75 (LHTPVYLFLNHLAFVDILYST). The Extracellular segment spans residues 76–99 (LVSVIMLMELLEHELALPVAACAA). A disulfide bond links C97 and C189. The helical transmembrane segment at 100-120 (ELCITVLFGSSECFLLAAMAY) threads the bilayer. At 121–133 (DCYVAICSPLLYS) the chain is on the cytoplasmic side. The chain crosses the membrane as a helical span at residues 134-154 (TLMSSRVCFLLLGMSYVGGCM). Over 155–196 (NGWIFTGCLLNLSFYGPYQIDHFFCDFSPLLKLSCSDVSIIG) the chain is Extracellular. N165 carries an N-linked (GlcNAc...) asparagine glycan. The chain crosses the membrane as a helical span at residues 197-217 (IIPSISSGSIIVVTVLVIAVF). The Cytoplasmic portion of the chain corresponds to 218 to 237 (YICILMTILKMHSTDGCHKA). A helical membrane pass occupies residues 238–258 (FSTCNSYLTAVTLYYGTITFI). Over 259–271 (YVMPKSNYSTEKN) the chain is Extracellular. N265 carries N-linked (GlcNAc...) asparagine glycosylation. Residues 272 to 292 (KVLSEFYTVVIPMLNHLIYSL) form a helical membrane-spanning segment. At 293-310 (KNRDVKDALRKAIVRVYT) the chain is on the cytoplasmic side.

The protein belongs to the G-protein coupled receptor 1 family.

The protein resides in the cell membrane. Potential odorant receptor. This is Olfactory receptor 5P54 from Mus musculus (Mouse).